The primary structure comprises 242 residues: Uridylate kinase (242 aa).

15-18 provides a ligand contact to ATP; the sequence is KLSG. Residues 23–28 form an involved in allosteric activation by GTP region; the sequence is GDEGFG. Gly57 is a UMP binding site. 2 residues coordinate ATP: Gly58 and Arg62. Residues Asp77 and 138–145 contribute to the UMP site; that span reads TGNPFCTT. Residues Thr165, Tyr171, and Asp174 each coordinate ATP.

The protein belongs to the UMP kinase family. Homohexamer.

The protein localises to the cytoplasm. It catalyses the reaction UMP + ATP = UDP + ADP. It participates in pyrimidine metabolism; CTP biosynthesis via de novo pathway; UDP from UMP (UMPK route): step 1/1. With respect to regulation, allosterically activated by GTP. Inhibited by UTP. Its function is as follows. Catalyzes the reversible phosphorylation of UMP to UDP. The polypeptide is Uridylate kinase (Shewanella sp. (strain MR-4)).